Here is an 86-residue protein sequence, read N- to C-terminus: Serine protease inhibitor Kazal-type 2 (86 aa).

Positions 1-16 (MLRLVLLLLVTDFAAS) are cleaved as a signal peptide. Residues 32–86 (QFRTPDCGHFDFPACPRNLNPVCGTDMNTYSNECTLCMKIREDGSHINIIKDEPC) form the Kazal-like domain. Disulfide bonds link C38–C68, C46–C65, and C54–C86.

As to expression, expressed in sperm (at protein level). Expressed in testis but not in ovary, brain, heart, kidney or lung. Within testis, expressed in epididymis and germ cells.

It is found in the secreted. It localises to the cytoplasmic vesicle. The protein resides in the secretory vesicle. The protein localises to the acrosome. Functionally, as a strong inhibitor of acrosin, it is required for normal spermiogenesis. It probably hinders premature activation of proacrosin and other proteases, thus preventing the cascade of events leading to spermiogenesis defects. May be involved in the regulation of serine protease-dependent germ cell apoptosis. It also inhibits trypsin. The chain is Serine protease inhibitor Kazal-type 2 (Spink2) from Mus musculus (Mouse).